We begin with the raw amino-acid sequence, 601 residues long: Probable Xaa-Pro aminopeptidase P (601 aa).

4 residues coordinate Mn(2+): aspartate 398, aspartate 409, glutamate 507, and glutamate 521.

Belongs to the peptidase M24B family. Mn(2+) serves as cofactor.

It catalyses the reaction Release of any N-terminal amino acid, including proline, that is linked to proline, even from a dipeptide or tripeptide.. In terms of biological role, catalyzes the removal of a penultimate prolyl residue from the N-termini of peptides. This Sclerotinia sclerotiorum (strain ATCC 18683 / 1980 / Ss-1) (White mold) protein is Probable Xaa-Pro aminopeptidase P (ampp).